Reading from the N-terminus, the 379-residue chain is Putative F-box protein At5g62660 (379 aa).

One can recognise an F-box domain in the interval 35 to 84; that stretch reads ALVAPEIPLDLLIEILTKLPAKSLMRFKCVSKLWSSLIRSRFFSNCYLTV.

This is Putative F-box protein At5g62660 from Arabidopsis thaliana (Mouse-ear cress).